The chain runs to 142 residues: Prefoldin subunit alpha 1 (142 aa).

The protein belongs to the prefoldin subunit alpha family. Heterohexamer of two alpha and four beta subunits.

The protein localises to the cytoplasm. Its function is as follows. Molecular chaperone capable of stabilizing a range of proteins. Seems to fulfill an ATP-independent, HSP70-like function in archaeal de novo protein folding. The protein is Prefoldin subunit alpha 1 (pfdA1) of Methanocaldococcus jannaschii (strain ATCC 43067 / DSM 2661 / JAL-1 / JCM 10045 / NBRC 100440) (Methanococcus jannaschii).